The chain runs to 445 residues: Arginine/agmatine antiporter (445 aa).

Topologically, residues 1–12 (MSSDADAHKVGL) are cytoplasmic. A helical membrane pass occupies residues 13 to 24 (IPVTLMVSGNIM). Isoleucine 23, serine 26, and glycine 27 together coordinate L-arginine. The Helix-breaking GSG motif TM1 signature appears at 25-27 (GSG). Over 25–42 (GSGVFLLPANLASTGGIA) the chain is Periplasmic. The chain crosses the membrane as a helical span at residues 43–61 (IYGWLVTIIGALGLSMVYA). The Cytoplasmic segment spans residues 62-86 (KMSFLDPSPGGSYAYARRCFGPFLG). A helical transmembrane segment spans residues 87 to 112 (YQTNVLYWLACWIGNIAMVVIGVGYL). L-arginine is bound by residues alanine 96, cysteine 97, and asparagine 101. The Periplasmic portion of the chain corresponds to 113-124 (SYFFPILKDPLV). Residues 125-142 (LTITCVVVLWIFVLLNIV) form a helical membrane-spanning segment. Position 143 (glycine 143) is a topological domain, cytoplasmic. Residues 144–171 (PKMITRVQAVATVLALIPIVGIAVFGWF) traverse the membrane as a helical segment. Topologically, residues 172 to 194 (WFRGETYMAAWNVSGLGTFGAIQ) are periplasmic. The helical transmembrane segment at 195-207 (STLNVTLWSFIGV) threads the bilayer. Residues tryptophan 202 and isoleucine 205 each coordinate L-arginine. The Helix-breaking GVESA motif TM6 motif lies at 206 to 210 (GVESA). At 208–226 (ESASVAAGVVKNPKRNVPI) the chain is on the cytoplasmic side. The helical transmembrane segment at 227 to 247 (ATIGGVLIAAVCYVLSTTAIM) threads the bilayer. At 248–277 (GMIPNAALRVSASPFGDAARMALGDTAGAI) the chain is on the periplasmic side. Residues 278–301 (VSFCAAAGCLGSLGGWTLLAGQTA) form a helical membrane-spanning segment. Tryptophan 293 contacts L-arginine. The Cytoplasmic segment spans residues 302 to 323 (KAAADDGLFPPIFARVNKAGTP). Residues 324–340 (VAGLIIVGILMTIFQLS) form a helical membrane-spanning segment. Residues 341-352 (SISPNATKEFGL) lie on the Periplasmic side of the membrane. The chain crosses the membrane as a helical span at residues 353–370 (VSSVSVIFTLVPYLYTCA). Serine 357 is an L-arginine binding site. The Cytoplasmic portion of the chain corresponds to 371–388 (ALLLLGHGHFGKARPAYL). A helical transmembrane segment spans residues 389–404 (AVTTIAFLYCIWAVVG). At 405 to 407 (SGA) the chain is on the periplasmic side. Residues 408–426 (KEVMWSFVTLMVITAMYAL) traverse the membrane as a helical segment. Residues 427 to 445 (NYNRLHKNPYPLDAPISKD) are Cytoplasmic-facing.

It belongs to the amino acid-polyamine-organocation (APC) superfamily. Basic amino acid/polyamine antiporter (APA) (TC 2.A.3.2) family. Homodimer;each subunit has its own individual transport capacity.

The protein localises to the cell inner membrane. It carries out the reaction agmatine(in) + L-arginine(out) = agmatine(out) + L-arginine(in). Functionally, major component of the acid-resistance (AR) system allowing enteric pathogens to survive the acidic environment in the stomach. Exchanges extracellular arginine for its intracellular decarboxylation product agmatine (Agm) thereby expelling intracellular protons. Probably undergoes several conformational states in order to translocate the substrate across the membrane; keeps the substrate accessible to only 1 side of the membrane at a time by opening and closing 3 membrane-internal gates. The protein is Arginine/agmatine antiporter (adiC) of Escherichia coli O157:H7.